The following is an 87-amino-acid chain: Small ribosomal subunit protein bS20 (87 aa).

The interval 1 to 22 (MAHHKSALKRIKQNKRKQFRNK) is disordered.

Belongs to the bacterial ribosomal protein bS20 family.

Its function is as follows. Binds directly to 16S ribosomal RNA. The protein is Small ribosomal subunit protein bS20 of Geobacter metallireducens (strain ATCC 53774 / DSM 7210 / GS-15).